A 190-amino-acid chain; its full sequence is 7-methyl-GTP pyrophosphatase (190 aa).

The active-site Proton acceptor is Asp-69.

Belongs to the Maf family. YceF subfamily. A divalent metal cation is required as a cofactor.

It is found in the cytoplasm. It catalyses the reaction N(7)-methyl-GTP + H2O = N(7)-methyl-GMP + diphosphate + H(+). Nucleoside triphosphate pyrophosphatase that hydrolyzes 7-methyl-GTP (m(7)GTP). May have a dual role in cell division arrest and in preventing the incorporation of modified nucleotides into cellular nucleic acids. This Xanthomonas axonopodis pv. citri (strain 306) protein is 7-methyl-GTP pyrophosphatase.